A 172-amino-acid polypeptide reads, in one-letter code: MPEELTPTPETAVVEAGPVSRWLSENGFENTALERDHLGVEIVQVDREVLLPIAAALFAYGFNYLQCQGGYDLGPGQDLVSFYHLTKVSDDASQPQEVRVKVFLPRHDPKVPSVFWIWKGADWQERETFDMYGIQFEGHPNLKRILMPEDWVGWPLRKDYISPDFYELQDAY.

It belongs to the complex I 30 kDa subunit family. In terms of assembly, NDH-1 can be composed of about 15 different subunits; different subcomplexes with different compositions have been identified which probably have different functions.

It localises to the cellular thylakoid membrane. It carries out the reaction a plastoquinone + NADH + (n+1) H(+)(in) = a plastoquinol + NAD(+) + n H(+)(out). The catalysed reaction is a plastoquinone + NADPH + (n+1) H(+)(in) = a plastoquinol + NADP(+) + n H(+)(out). In terms of biological role, NDH-1 shuttles electrons from an unknown electron donor, via FMN and iron-sulfur (Fe-S) centers, to quinones in the respiratory and/or the photosynthetic chain. The immediate electron acceptor for the enzyme in this species is believed to be plastoquinone. Couples the redox reaction to proton translocation, and thus conserves the redox energy in a proton gradient. Cyanobacterial NDH-1 also plays a role in inorganic carbon-concentration. The protein is NAD(P)H-quinone oxidoreductase subunit J of Synechococcus elongatus (strain ATCC 33912 / PCC 7942 / FACHB-805) (Anacystis nidulans R2).